The following is a 240-amino-acid chain: Ubiquinone biosynthesis O-methyltransferase (240 aa).

S-adenosyl-L-methionine-binding residues include R36, G66, D87, and M129.

Belongs to the methyltransferase superfamily. UbiG/COQ3 family.

The enzyme catalyses a 3-demethylubiquinol + S-adenosyl-L-methionine = a ubiquinol + S-adenosyl-L-homocysteine + H(+). It carries out the reaction a 3-(all-trans-polyprenyl)benzene-1,2-diol + S-adenosyl-L-methionine = a 2-methoxy-6-(all-trans-polyprenyl)phenol + S-adenosyl-L-homocysteine + H(+). It participates in cofactor biosynthesis; ubiquinone biosynthesis. Its function is as follows. O-methyltransferase that catalyzes the 2 O-methylation steps in the ubiquinone biosynthetic pathway. This Pelagibacter ubique (strain HTCC1062) protein is Ubiquinone biosynthesis O-methyltransferase.